Consider the following 207-residue polypeptide: Large ribosomal subunit protein uL4 (207 aa).

The interval Met-44 to Gly-85 is disordered.

This sequence belongs to the universal ribosomal protein uL4 family. Part of the 50S ribosomal subunit.

In terms of biological role, one of the primary rRNA binding proteins, this protein initially binds near the 5'-end of the 23S rRNA. It is important during the early stages of 50S assembly. It makes multiple contacts with different domains of the 23S rRNA in the assembled 50S subunit and ribosome. Forms part of the polypeptide exit tunnel. This is Large ribosomal subunit protein uL4 from Geobacillus thermodenitrificans (strain NG80-2).